A 641-amino-acid polypeptide reads, in one-letter code: Fructose-1,6-bisphosphatase class 3 (641 aa).

It belongs to the FBPase class 3 family. Mn(2+) is required as a cofactor.

It catalyses the reaction beta-D-fructose 1,6-bisphosphate + H2O = beta-D-fructose 6-phosphate + phosphate. The protein operates within carbohydrate biosynthesis; gluconeogenesis. The protein is Fructose-1,6-bisphosphatase class 3 of Bacillus velezensis (strain DSM 23117 / BGSC 10A6 / LMG 26770 / FZB42) (Bacillus amyloliquefaciens subsp. plantarum).